The sequence spans 87 residues: Putative defensin-like protein 231 (87 aa).

The first 26 residues, 1 to 26, serve as a signal peptide directing secretion; it reads MKFATCFLVSYVLVFLVLSVCKEVEA. Disulfide bonds link Cys-30–Cys-85, Cys-40–Cys-66, Cys-48–Cys-79, and Cys-64–Cys-81.

It belongs to the DEFL family.

The protein resides in the secreted. This Arabidopsis thaliana (Mouse-ear cress) protein is Putative defensin-like protein 231 (SCRL25).